Consider the following 192-residue polypeptide: Fe/S biogenesis protein NfuA (192 aa).

[4Fe-4S] cluster contacts are provided by cysteine 150 and cysteine 153.

The protein belongs to the NfuA family. In terms of assembly, homodimer. [4Fe-4S] cluster serves as cofactor.

In terms of biological role, involved in iron-sulfur cluster biogenesis. Binds a 4Fe-4S cluster, can transfer this cluster to apoproteins, and thereby intervenes in the maturation of Fe/S proteins. Could also act as a scaffold/chaperone for damaged Fe/S proteins. This is Fe/S biogenesis protein NfuA from Buchnera aphidicola subsp. Acyrthosiphon pisum (strain APS) (Acyrthosiphon pisum symbiotic bacterium).